Here is a 402-residue protein sequence, read N- to C-terminus: Multidrug resistance protein MdtH (402 aa).

Residues 1-12 (MSRVSQARNLGK) are Cytoplasmic-facing. The chain crosses the membrane as a helical span at residues 13–33 (YFLLIDNMLVVLGFFVVFPLI). Topologically, residues 34–98 (SIRFVDQMGW…GFATMGIAHE (65 aa)) are periplasmic. A helical transmembrane segment spans residues 99 to 116 (PWLLWFSCLLSGLGGTLF). Residues 117–138 (DPPRSALVVKLIRPQQRGRFFS) are Cytoplasmic-facing. Residues 139 to 159 (LLMMQDSAGAVIGALLGSWLL) form a helical membrane-spanning segment. At 160–164 (QYDFR) the chain is on the periplasmic side. Residues 165 to 185 (LVCATGAVLFVLCAAFNAWLL) form a helical membrane-spanning segment. Over 186–213 (PAWKLSTVRTPVREGMTRVMRDKRFVTY) the chain is Cytoplasmic. The helical transmembrane segment at 214–234 (VLTLAGYYMLAVQVMLMLPIM) threads the bilayer. At 235-243 (VNDVAGAPS) the chain is on the periplasmic side. Residues 244–264 (AVKWMYAIEACLSLTLLYPIA) form a helical membrane-spanning segment. Topologically, residues 265–276 (RWSEKHFRLEHR) are cytoplasmic. The chain crosses the membrane as a helical span at residues 277 to 297 (LMAGLLIMSLSMMPVGMVSGL). Topologically, residues 298 to 299 (QQ) are periplasmic. The chain crosses the membrane as a helical span at residues 300–320 (LFTLICLFYIGSIIAEPARET). Over 321–339 (LSASLADARARGSYMGFSR) the chain is Cytoplasmic. Residues 340 to 360 (LGLAIGGAIGYIGGGWLFDLG) traverse the membrane as a helical segment. The Periplasmic segment spans residues 361 to 367 (KSVHQPE). Residues 368-388 (LPWMMLGIIGIFTFLALGWQF) traverse the membrane as a helical segment. Topologically, residues 389 to 402 (SQKRAARRLLERDA) are cytoplasmic.

It belongs to the major facilitator superfamily. DHA1 family. MdtH (TC 2.A.1.2.21) subfamily.

Its subcellular location is the cell inner membrane. Confers resistance to norfloxacin and enoxacin. This is Multidrug resistance protein MdtH from Escherichia coli O157:H7.